Consider the following 309-residue polypeptide: tRNA-cytidine(32) 2-sulfurtransferase (309 aa).

The short motif at serine 47–serine 52 is the PP-loop motif element. [4Fe-4S] cluster-binding residues include cysteine 122, cysteine 125, and cysteine 213.

Belongs to the TtcA family. As to quaternary structure, homodimer. Requires Mg(2+) as cofactor. It depends on [4Fe-4S] cluster as a cofactor.

Its subcellular location is the cytoplasm. The catalysed reaction is cytidine(32) in tRNA + S-sulfanyl-L-cysteinyl-[cysteine desulfurase] + AH2 + ATP = 2-thiocytidine(32) in tRNA + L-cysteinyl-[cysteine desulfurase] + A + AMP + diphosphate + H(+). The protein operates within tRNA modification. Catalyzes the ATP-dependent 2-thiolation of cytidine in position 32 of tRNA, to form 2-thiocytidine (s(2)C32). The sulfur atoms are provided by the cysteine/cysteine desulfurase (IscS) system. In Erwinia tasmaniensis (strain DSM 17950 / CFBP 7177 / CIP 109463 / NCPPB 4357 / Et1/99), this protein is tRNA-cytidine(32) 2-sulfurtransferase.